A 184-amino-acid chain; its full sequence is Large ribosomal subunit protein uL15 (184 aa).

The interval Met-1–Lys-45 is disordered. Over residues Arg-21–Asn-35 the composition is skewed to gly residues.

Belongs to the universal ribosomal protein uL15 family. Part of the 50S ribosomal subunit.

Binds to the 23S rRNA. This chain is Large ribosomal subunit protein uL15, found in Pelodictyon phaeoclathratiforme (strain DSM 5477 / BU-1).